The sequence spans 724 residues: NAD(+) hydrolase SARM1 (724 aa).

A mitochondrion-targeting transit peptide spans M1–R27. The ARM 1 repeat unit spans residues E60 to E100. Residues W103, R110, E149–R157, and H190–K193 each bind NAD(+). ARM repeat units lie at residues Q114–V153, E155–K193, E196–L235, G237–N280, K281–D314, A315–A354, and Q359–P402. SAM domains lie at W412–F476 and N486–S548. S548 and S558 each carry phosphoserine. Residues D560–P703 form the TIR domain. Residues R569 to R570 and E599 contribute to the NAD(+) site. The active site involves E642. Positions P703–G717 are enriched in polar residues. Positions P703–P724 are disordered.

This sequence belongs to the SARM1 family. In terms of assembly, homooctamer; forms an octameric ring via SAM domains. Interacts with TICAM1/TRIF and thereby interferes with TICAM1/TRIF function. Interacts with MAPK10/JNK3 and SDC2 (via cytoplasmic domain). Phosphorylation at Ser-548 by JNK kinases (MAPK8, MAPK9 and /or MAPK10) enhance the NAD(+) hydrolase (NADase) activity. Phosphorylation at Ser-548 and subsequent activation takes place in response to oxidative stress conditions and inhibits mitochondrial respiration. Phosphorylation at Ser-548 increases in response to cerebral ischemia/reperfusion (I/R) injury.

It localises to the cytoplasm. It is found in the cell projection. The protein localises to the axon. The protein resides in the dendrite. Its subcellular location is the synapse. It localises to the mitochondrion. It carries out the reaction NAD(+) + H2O = ADP-D-ribose + nicotinamide + H(+). It catalyses the reaction NAD(+) = cyclic ADP-beta-D-ribose + nicotinamide + H(+). The enzyme catalyses NADP(+) + H2O = ADP-D-ribose 2'-phosphate + nicotinamide + H(+). Autoinhibited: in the inactive state, the enzymatic TIR domain is held apart by the autoinhibiting ARM repeats. NAD(+)-binding to ARM repeats maintains an inactive state by promoting interaction between ARM repeats and the TIR domain, thereby facilitating inhibition of the enzymatic TIR domain. Following activation, possibly by nicotinamide mononucleotide (NMN), auto-inhibitory interactions are released, allowing self-association of the TIR domains and subsequent activation of the NAD(+) hydrolase (NADase) activity. Self-association of TIR domains is facilitated by the octamer of SAM domains. In terms of biological role, NAD(+) hydrolase, which plays a key role in axonal degeneration following injury by regulating NAD(+) metabolism. Acts as a negative regulator of MYD88- and TRIF-dependent toll-like receptor signaling pathway by promoting Wallerian degeneration, an injury-induced form of programmed subcellular death which involves degeneration of an axon distal to the injury site. Wallerian degeneration is triggered by NAD(+) depletion: in response to injury, SARM1 is activated and catalyzes cleavage of NAD(+) into ADP-D-ribose (ADPR), cyclic ADPR (cADPR) and nicotinamide; NAD(+) cleavage promoting cytoskeletal degradation and axon destruction. Also able to hydrolyze NADP(+), but not other NAD(+)-related molecules. Can activate neuronal cell death in response to stress. Regulates dendritic arborization through the MAPK4-JNK pathway. Involved in innate immune response: inhibits both TICAM1/TRIF- and MYD88-dependent activation of JUN/AP-1, TRIF-dependent activation of NF-kappa-B and IRF3, and the phosphorylation of MAPK14/p38. This chain is NAD(+) hydrolase SARM1, found in Rattus norvegicus (Rat).